A 376-amino-acid polypeptide reads, in one-letter code: Erythronate-4-phosphate dehydrogenase (376 aa).

Substrate contacts are provided by serine 45 and threonine 67. Aspartate 147 lines the NAD(+) pocket. The active site involves arginine 209. Aspartate 233 is an NAD(+) binding site. Glutamate 238 is a catalytic residue. Histidine 255 acts as the Proton donor in catalysis. An NAD(+)-binding site is contributed by glycine 258. Tyrosine 259 provides a ligand contact to substrate.

Belongs to the D-isomer specific 2-hydroxyacid dehydrogenase family. PdxB subfamily. Homodimer.

The protein resides in the cytoplasm. It carries out the reaction 4-phospho-D-erythronate + NAD(+) = (R)-3-hydroxy-2-oxo-4-phosphooxybutanoate + NADH + H(+). It functions in the pathway cofactor biosynthesis; pyridoxine 5'-phosphate biosynthesis; pyridoxine 5'-phosphate from D-erythrose 4-phosphate: step 2/5. Catalyzes the oxidation of erythronate-4-phosphate to 3-hydroxy-2-oxo-4-phosphonooxybutanoate. The protein is Erythronate-4-phosphate dehydrogenase of Shewanella sp. (strain MR-7).